Here is a 966-residue protein sequence, read N- to C-terminus: Serine/threonine-protein kinase 10 (966 aa).

Residues Ser13 and Ser20 each carry the phosphoserine modification. The region spanning 36 to 294 (WEIVGELGDG…AAQLLQHPFV (259 aa)) is the Protein kinase domain. Residues 42 to 50 (LGDGAFGKV) and Lys65 contribute to the ATP site. Asp157 functions as the Proton acceptor in the catalytic mechanism. The interval 175-224 (DFGVSAKNLKTLQKRDSFIGTPYWMAPEVVLCETMKDAPYDYKADIWSLG) is activation segment. Thr185 carries the post-translational modification Phosphothreonine; by autocatalysis. Residue Ser191 is modified to Phosphoserine. Composition is skewed to polar residues over residues 341 to 363 (TQDS…DSST) and 371 to 392 (QEPV…TTSP). The disordered stretch occupies residues 341–497 (TQDSANVTQP…NLSTSESMDY (157 aa)). Residues 421-430 (IQMDEEKQIP) show a composition bias toward basic and acidic residues. Phosphoserine is present on residues Ser437, Ser449, Ser453, and Ser484. The segment covering 438–456 (PAASKSQKANQSRPNSSAL) has biased composition (polar residues). Residues 485 to 497 (DCSNLSTSESMDY) are compositionally biased toward polar residues. Residues Ser513 and Ser548 each carry the phosphoserine modification. A coiled-coil region spans residues 588-936 (LQLEQMHKRF…LNQKKREQEM (349 aa)). Disordered stretches follow at residues 660 to 692 (KKEV…KKQR), 826 to 865 (INGA…ENQM), and 901 to 966 (LDES…GDAS). 2 stretches are compositionally biased toward basic and acidic residues: residues 834–865 (EQRE…ENQM) and 901–946 (LDES…EAEP). Thr950 is modified (phosphothreonine). A compositionally biased stretch (polar residues) spans 950–966 (TPSKASNFFPYSSGDAS).

The protein belongs to the protein kinase superfamily. STE Ser/Thr protein kinase family. STE20 subfamily. As to quaternary structure, homodimer; homodimerization is required for activation segment autophosphorylation. Autophosphorylates following homodimerization, leading to activation of the protein. In terms of tissue distribution, expressed predominantly in lymphoid organs such as spleen, thymus, and bone marrow.

It localises to the cell membrane. It catalyses the reaction L-seryl-[protein] + ATP = O-phospho-L-seryl-[protein] + ADP + H(+). It carries out the reaction L-threonyl-[protein] + ATP = O-phospho-L-threonyl-[protein] + ADP + H(+). Inhibited by the pyrrole-indolinone inhibitor SU11274 (K00593): intercalates between the ATP-binding Lys-65 and alpha-C glutamate (Glu-81), resulting in a partial disordering of the lysine side chain. Also specifically inhibited by erlotinib. Slightly inhibited by gefitinib. Functionally, serine/threonine-protein kinase involved in regulation of lymphocyte migration. Phosphorylates MSN, and possibly PLK1. Involved in regulation of lymphocyte migration by mediating phosphorylation of ERM proteins such as MSN. Acts as a negative regulator of MAP3K1/MEKK1. May also act as a cell cycle regulator by acting as a polo kinase kinase: mediates phosphorylation of PLK1 in vitro; however such data require additional evidences in vivo. The chain is Serine/threonine-protein kinase 10 (Stk10) from Mus musculus (Mouse).